The sequence spans 402 residues: Phosphoglycerate kinase (402 aa).

Residues 24-26 (DFN), arginine 40, 63-66 (HFGR), arginine 122, and arginine 155 each bind substrate. ATP-binding positions include lysine 206, glycine 297, glutamate 328, and 357–360 (GGDS).

This sequence belongs to the phosphoglycerate kinase family. Monomer.

It localises to the cytoplasm. The enzyme catalyses (2R)-3-phosphoglycerate + ATP = (2R)-3-phospho-glyceroyl phosphate + ADP. It functions in the pathway carbohydrate degradation; glycolysis; pyruvate from D-glyceraldehyde 3-phosphate: step 2/5. The sequence is that of Phosphoglycerate kinase from Synechococcus sp. (strain RCC307).